The chain runs to 463 residues: L-seryl-tRNA(Sec) selenium transferase (463 aa).

At K295 the chain carries N6-(pyridoxal phosphate)lysine.

It belongs to the SelA family. In terms of assembly, homodecamer; pentamer of dimers. Binds only one seryl-tRNA(Sec) per dimer. Pyridoxal 5'-phosphate is required as a cofactor.

Its subcellular location is the cytoplasm. It catalyses the reaction L-seryl-tRNA(Sec) + selenophosphate + H(+) = L-selenocysteinyl-tRNA(Sec) + phosphate. The protein operates within aminoacyl-tRNA biosynthesis; selenocysteinyl-tRNA(Sec) biosynthesis; selenocysteinyl-tRNA(Sec) from L-seryl-tRNA(Sec) (bacterial route): step 1/1. Functionally, converts seryl-tRNA(Sec) to selenocysteinyl-tRNA(Sec) required for selenoprotein biosynthesis. The chain is L-seryl-tRNA(Sec) selenium transferase from Escherichia coli O6:H1 (strain CFT073 / ATCC 700928 / UPEC).